The primary structure comprises 133 residues: MNALRGLLNKYTGNQIVFSNKYATTFFEKFPKLAFLNNVTNLAPMMKWSLSIVPITQILSGTKLPENIDVYQASSLCATGSIWTYYATLISPQNTGTRMLAACNAAMAACHGYNIYRRTKWEKSQIIPIENKN.

The next 3 membrane-spanning stretches (helical) occupy residues 39 to 55 (VTNL…IVPI), 73 to 91 (ASSL…TLIS), and 99 to 116 (MLAA…YNIY).

It belongs to the mitochondrial pyruvate carrier (MPC) (TC 2.A.105) family.

The protein localises to the mitochondrion inner membrane. In terms of biological role, may mediate the uptake of pyruvate into mitochondria. In Dictyostelium discoideum (Social amoeba), this protein is Probable mitochondrial pyruvate carrier 2.